A 727-amino-acid polypeptide reads, in one-letter code: Two-component response regulator-like APRR7 (727 aa).

The tract at residues 1–47 is disordered; sequence MNANEEGEGSRYPITDRKTGETKFDRVESRTEKHSEEEKTNGITMDV. The span at 14–40 shows a compositional bias: basic and acidic residues; the sequence is ITDRKTGETKFDRVESRTEKHSEEEKT. The region spanning 79-197 is the Response regulatory domain; the sequence is RVLLVENDDC…ELKILWQHVW (119 aa). Disordered stretches follow at residues 203–265, 291–312, 339–416, 464–487, 509–560, and 606–670; these read SSGS…KKAV, NPEF…QEHD, KDEP…KTLD, SRYN…SLQD, ESLP…QPLP, and VNGS…SQRE. The span at 246 to 259 shows a compositional bias: low complexity; the sequence is ASDGSSDGSGAQSS. Composition is skewed to polar residues over residues 344-353, 467-487, and 519-535; these read SKTTGIMRQD, NPAS…SLQD, and VGSN…NNAF. The span at 538–555 shows a compositional bias: low complexity; sequence PGAPKVSSAGSSSVKHSS. Residues 641–657 show a composition bias toward gly residues; that stretch reads GKNGNGDGSGSGSGSGS. The CCT domain occupies 669–711; that stretch reads REAALTKFRQKRKERCFRKKVRYQSRKKLAEQRPRVRGQFVRK.

It belongs to the ARR-like family. In terms of processing, phosphorylated. Phosphorylation varies throughout the diurnal cycle.

The protein resides in the nucleus. Functionally, transcriptional repressor of CCA1 and LHY, and positive regulator of LWD1 and LWD2 expression. Represses the expression of other clock proteins and master regulators of plant growth, development and response to abiotic stress. Involved in the positive and negative feedback loops of the circadian clock. Controls photoperiodic flowering response and temperature compensation. Expression of several members of the ARR-like family is controlled by circadian rhythm. APRR9, APRR7, and APRR5 coordinately act on the upstream region of the target genes to repress their expression from noon until midnight. The particular coordinated sequential expression of APRR9, APRR7, APRR5, APRR3 and APPR1 result to circadian waves that may be at the basis of the endogenous circadian clock. In Arabidopsis thaliana (Mouse-ear cress), this protein is Two-component response regulator-like APRR7 (APRR7).